The chain runs to 359 residues: S-adenosylmethionine-dependent nucleotide dehydratase RSAD2 (359 aa).

Residues glutamine 43–phenylalanine 67 are disordered. Over residues serine 50–serine 63 the composition is skewed to basic and acidic residues. Residues phenylalanine 67 to leucine 287 enclose the Radical SAM core domain. The [4Fe-4S] cluster site is built by cysteine 81, cysteine 85, and cysteine 88.

The protein belongs to the radical SAM superfamily. RSAD2 family. The cofactor is [4Fe-4S] cluster.

It localises to the endoplasmic reticulum membrane. Functionally, interferon-inducible iron-sulfur (4FE-4S) cluster-binding antiviral protein which plays a major role in the cell antiviral state induced by type I and type II interferon. The chain is S-adenosylmethionine-dependent nucleotide dehydratase RSAD2 from Danio rerio (Zebrafish).